A 132-amino-acid chain; its full sequence is Small ribosomal subunit protein uS8 (132 aa).

It belongs to the universal ribosomal protein uS8 family. Part of the 30S ribosomal subunit. Contacts proteins S5 and S12.

Functionally, one of the primary rRNA binding proteins, it binds directly to 16S rRNA central domain where it helps coordinate assembly of the platform of the 30S subunit. The polypeptide is Small ribosomal subunit protein uS8 (Syntrophomonas wolfei subsp. wolfei (strain DSM 2245B / Goettingen)).